The chain runs to 296 residues: Ribosomal RNA small subunit methyltransferase H (296 aa).

S-adenosyl-L-methionine is bound by residues 38-40, E57, F88, D103, and H110; that span reads GVH.

Belongs to the methyltransferase superfamily. RsmH family.

It localises to the cytoplasm. The enzyme catalyses cytidine(1402) in 16S rRNA + S-adenosyl-L-methionine = N(4)-methylcytidine(1402) in 16S rRNA + S-adenosyl-L-homocysteine + H(+). In terms of biological role, specifically methylates the N4 position of cytidine in position 1402 (C1402) of 16S rRNA. In Borreliella burgdorferi (strain ZS7) (Borrelia burgdorferi), this protein is Ribosomal RNA small subunit methyltransferase H.